The primary structure comprises 152 residues: Deoxyuridine 5'-triphosphate nucleotidohydrolase (152 aa).

Substrate is bound by residues 71 to 73, Asn-84, 88 to 90, and Met-98; these read RSG and LID.

It belongs to the dUTPase family. Requires Mg(2+) as cofactor.

It catalyses the reaction dUTP + H2O = dUMP + diphosphate + H(+). Its pathway is pyrimidine metabolism; dUMP biosynthesis; dUMP from dCTP (dUTP route): step 2/2. Its function is as follows. This enzyme is involved in nucleotide metabolism: it produces dUMP, the immediate precursor of thymidine nucleotides and it decreases the intracellular concentration of dUTP so that uracil cannot be incorporated into DNA. This is Deoxyuridine 5'-triphosphate nucleotidohydrolase from Klebsiella pneumoniae subsp. pneumoniae (strain ATCC 700721 / MGH 78578).